The chain runs to 419 residues: Methionine aminopeptidase 2 (419 aa).

Positions 1–69 (MSTNSSNPNE…KITAIDNSYP (69 aa)) are disordered. Positions 11–29 (VMEKVQDLKIDDSKPKVDS) are enriched in basic and acidic residues. The span at 30-41 (EEQPEAESDGES) shows a compositional bias: acidic residues. The segment covering 48–61 (KKKKKKKSKKKKKI) has biased composition (basic residues). Substrate is bound at residue His172. Residues Asp192, Asp203, and His272 each contribute to the a divalent metal cation site. Residue His280 participates in substrate binding. Residues Glu305 and Glu400 each contribute to the a divalent metal cation site.

The protein belongs to the peptidase M24A family. Methionine aminopeptidase eukaryotic type 2 subfamily. Co(2+) serves as cofactor. Zn(2+) is required as a cofactor. The cofactor is Mn(2+). Requires Fe(2+) as cofactor.

Its subcellular location is the cytoplasm. The catalysed reaction is Release of N-terminal amino acids, preferentially methionine, from peptides and arylamides.. In terms of biological role, cotranslationally removes the N-terminal methionine from nascent proteins. The N-terminal methionine is often cleaved when the second residue in the primary sequence is small and uncharged (Met-Ala-, Cys, Gly, Pro, Ser, Thr, or Val). This Debaryomyces hansenii (strain ATCC 36239 / CBS 767 / BCRC 21394 / JCM 1990 / NBRC 0083 / IGC 2968) (Yeast) protein is Methionine aminopeptidase 2.